Here is a 122-residue protein sequence, read N- to C-terminus: uncharacterized protein (122 aa).

It localises to the mitochondrion. This is an uncharacterized protein from Arabidopsis thaliana (Mouse-ear cress).